Reading from the N-terminus, the 64-residue chain is Translation machinery-associated protein 7 homolog (64 aa).

Residues 1–64 (MSGRQGGKAK…GGGIKKSGKK (64 aa)) form a disordered region. The stretch at 21–50 (DLSEEDVEFKKKQQEEAKKIKEMAAKAGQR) forms a coiled coil. Residues 28–44 (EFKKKQQEEAKKIKEMA) show a composition bias toward basic and acidic residues. A compositionally biased stretch (gly residues) spans 53-64 (LLGGGIKKSGKK).

Belongs to the TMA7 family.

This Caenorhabditis elegans protein is Translation machinery-associated protein 7 homolog.